The primary structure comprises 105 residues: Large ribosomal subunit protein bL21 (105 aa).

This sequence belongs to the bacterial ribosomal protein bL21 family. In terms of assembly, part of the 50S ribosomal subunit. Contacts protein L20.

Functionally, this protein binds to 23S rRNA in the presence of protein L20. The protein is Large ribosomal subunit protein bL21 of Blochmanniella pennsylvanica (strain BPEN).